The primary structure comprises 256 residues: Trypsin, alkaline B (256 aa).

An N-terminal signal peptide occupies residues Met1–Ala17. A propeptide spans Val18–Arg24 (activation peptide). The 232-residue stretch at Ile25–Ser256 folds into the Peptidase S1 domain. A disulfide bond links Cys55 and Cys71. Active-site charge relay system residues include His70 and Asp115. Intrachain disulfides connect Cys180–Cys197 and Cys209–Cys233. Ser213 (charge relay system) is an active-site residue.

Belongs to the peptidase S1 family. In terms of tissue distribution, midgut.

The protein localises to the secreted. Its subcellular location is the extracellular space. It carries out the reaction Preferential cleavage: Arg-|-Xaa, Lys-|-Xaa.. The polypeptide is Trypsin, alkaline B (Manduca sexta (Tobacco hawkmoth)).